A 221-amino-acid chain; its full sequence is Deoxyribose-phosphate aldolase (221 aa).

D90 acts as the Proton donor/acceptor in catalysis. The Schiff-base intermediate with acetaldehyde role is filled by K152. Catalysis depends on K181, which acts as the Proton donor/acceptor.

This sequence belongs to the DeoC/FbaB aldolase family. DeoC type 1 subfamily.

Its subcellular location is the cytoplasm. The catalysed reaction is 2-deoxy-D-ribose 5-phosphate = D-glyceraldehyde 3-phosphate + acetaldehyde. Its pathway is carbohydrate degradation; 2-deoxy-D-ribose 1-phosphate degradation; D-glyceraldehyde 3-phosphate and acetaldehyde from 2-deoxy-alpha-D-ribose 1-phosphate: step 2/2. Its function is as follows. Catalyzes a reversible aldol reaction between acetaldehyde and D-glyceraldehyde 3-phosphate to generate 2-deoxy-D-ribose 5-phosphate. The protein is Deoxyribose-phosphate aldolase of Exiguobacterium sibiricum (strain DSM 17290 / CCUG 55495 / CIP 109462 / JCM 13490 / 255-15).